We begin with the raw amino-acid sequence, 89 residues long: Small ribosomal subunit protein uS15 (89 aa).

Belongs to the universal ribosomal protein uS15 family. Part of the 30S ribosomal subunit. Forms a bridge to the 50S subunit in the 70S ribosome, contacting the 23S rRNA.

Its function is as follows. One of the primary rRNA binding proteins, it binds directly to 16S rRNA where it helps nucleate assembly of the platform of the 30S subunit by binding and bridging several RNA helices of the 16S rRNA. In terms of biological role, forms an intersubunit bridge (bridge B4) with the 23S rRNA of the 50S subunit in the ribosome. The chain is Small ribosomal subunit protein uS15 from Shewanella sediminis (strain HAW-EB3).